The sequence spans 470 residues: MRPFKQSKFSLVWTQNDPQPRMPIAHMRNQNIVPQLVPWKRVTYWRRLMNSVSAFRNGSSLNISRKLSMMRKRHTIYTRSTNGYSLRKSKVLSVGGSHLKWSKSIERDSRKANEEATLAVAAYSKKESEKQSGQNNTSTASRNHLARERVFRFGSLRYKMDSSRRTLQRISDVDSPCSGPSENGKGVKRPFIPKRLVIGNEEYVRFGNGNQLVRDPKKRTRVLANEKVRWSLHNARLRLAKKKKYCQFFTRFGKCNKDDGKCPYVHDPSKIAVCTKFLNGLCANANCKLTHKVIPERMPDCSYYLQGLCNNEACPYRHVHVNPIAPICDGFLKGYCSEGDECRKKHSYNCPVFEATGSCSQGLKCKLHHPKNQSKGRKRKRTNEPSQKNARRRYFSSLHNILSESEPMVFNRRSTDSEVFGMESLDFITLGTAEYEAGDDNDPATVQSISSDSESLISIYNLITPVALMQ.

Residues 122–144 (AYSKKESEKQSGQNNTSTASRNH) form a disordered region. Residues 131 to 142 (QSGQNNTSTASR) are compositionally biased toward polar residues. 5 C3H1-type zinc fingers span residues 240 to 269 (AKKK…HDPS), 273 to 294 (VCTK…HKVI), 295 to 321 (PERM…HVHV), 322 to 349 (NPIA…HSYN), and 350 to 372 (CPVF…HPKN). Over residues 370-381 (PKNQSKGRKRKR) the composition is skewed to basic residues. A disordered region spans residues 370 to 389 (PKNQSKGRKRKRTNEPSQKN).

In terms of biological role, possesses RNA-binding and ribonuclease activities in vitro. This chain is Zinc finger CCCH domain-containing protein 7, found in Arabidopsis thaliana (Mouse-ear cress).